The chain runs to 177 residues: Large ribosomal subunit protein uL6 (177 aa).

It belongs to the universal ribosomal protein uL6 family. In terms of assembly, part of the 50S ribosomal subunit.

Its function is as follows. This protein binds to the 23S rRNA, and is important in its secondary structure. It is located near the subunit interface in the base of the L7/L12 stalk, and near the tRNA binding site of the peptidyltransferase center. The protein is Large ribosomal subunit protein uL6 of Erythrobacter litoralis (strain HTCC2594).